The primary structure comprises 69 residues: Nodulin-3 (69 aa).

An N-terminal signal peptide occupies residues Met1–Ala24.

In Pisum sativum (Garden pea), this protein is Nodulin-3 (ENOD3).